The primary structure comprises 791 residues: MAGTSAPGSKRRSEPPAPRPGPPPGTGHPPSKRARGFSAAAAPDPDDPFGAHGDFTADDLEELDTLASQALSQCPAAARDVSSDHKVHRLLDGMSKNPSGKNRETVPIKDNFELEVLQAQYKELKEKMKVMEEEVLIKNGEIKILRDSLHQTESVLEEQRRSHFLLEQEKTQALSDKEKEFSKKLQSLQSELQFKDAEMNELRTKLQTSERANKLAAPSVSHVSPRKNPSVVIKPEACSPQFGKTSFPTKESFSANMSLPHPCQTESGYKPLVGREDSKPHSLRGDSIKQEEAQKSFVDSWRQRSNTQGSILINLLLKQPLIPGSSLSLCHLLSSSSESPAGTPLQPPGFGSTLAGMSGLRTTGSYDGSFSLSALREAQNLAFTGLNLVARNECSRDGDPAEGGRRAFPLCQLPGAVHFLPLVQFFIGLHCQALQDLAAAKRSGAPGDSPTHSSCVSSGVETNPEDSVCILEGFSVTALSILQHLVCHSGAVVSLLLSGVGADSAAGEGNRSLVHRLSDGDMTSALRGVADDQGQHPLLKMLLHLLAFSSAATGHLQASVLTQCLKVLVKLAENTSCDFLPRFQCVFQVLPKCLSPETPLPSVLLAVELLSLLADHDQLAPQLCSHSEGCLLLLLYMYITSRPDRVALETQWLQLEQEVVWLLAKLGVQSPLPPVTGSNCQCNVEVVRALTVMLHRQWLTVRRAGGPPRTDQQRRTVRCLRDTVLLLHGLSQKDKLFMMHCVEVLHQFDQVMPGVSMLIRGLPDVTDCEEAALDDLCAAETDVEDPEVECG.

Residues M1–A57 form a disordered region. The span at P15–G27 shows a compositional bias: pro residues. The segment covering G36 to D54 has biased composition (low complexity). Residues I108 to A217 are a coiled coil. Residues Q118–L156 form an interaction with CINP region. The short motif at E769–L776 is the EEXXXDL motif element.

Belongs to the ATRIP family. As to quaternary structure, interacts with ATR. Heterodimer with ATR. The heterodimer binds the RPA complex and is then recruited to single-stranded DNA. Interacts with CEP164 (via N-terminus). Interacts with CINP. In terms of processing, phosphorylated by ATR. Ubiquitous.

It localises to the nucleus. In terms of biological role, required for checkpoint signaling after DNA damage. Required for ATR expression, possibly by stabilizing the protein. In Homo sapiens (Human), this protein is ATR-interacting protein (ATRIP).